Here is a 255-residue protein sequence, read N- to C-terminus: NAD kinase (255 aa).

The active-site Proton acceptor is aspartate 44. NAD(+) is bound by residues 44-45 (DG), histidine 49, 114-115 (NE), aspartate 144, alanine 152, 155-160 (SAYNLS), and glutamine 216.

It belongs to the NAD kinase family. The cofactor is a divalent metal cation.

The protein localises to the cytoplasm. It carries out the reaction NAD(+) + ATP = ADP + NADP(+) + H(+). In terms of biological role, involved in the regulation of the intracellular balance of NAD and NADP, and is a key enzyme in the biosynthesis of NADP. Catalyzes specifically the phosphorylation on 2'-hydroxyl of the adenosine moiety of NAD to yield NADP. This chain is NAD kinase, found in Rickettsia africae (strain ESF-5).